The sequence spans 284 residues: MTGSLNRHSLLNGVKKMRIILCDTNEVVTNLWQESIPHAYIQNDKYLCIHHGHLQSLMDSMRKGDAIHHGHSYAIVSPGNSYGYLGGGFDKALYNYFGGKPFETWFRNQLGGRYHTVGSATVVDLQRCLEEKTIECRDGIRYIIHVPTVVAPSAPIFNPQNPLKTGFEPVFNAMWNALMHSPKDIDGLIIPGLCTGYAGVPPIISCKSMAFALRLYMAGDHISKELKNVLIMYYLQYPFEPFFPESCKIECQKLGIDIEMLKSFNVEKDAIELLIPRRILTLDL.

D23, Q55, N80, and D90 together coordinate substrate. The Macro domain occupies 34–230 (ESIPHAYIQN…HISKELKNVL (197 aa)). Residues N80 and D90 contribute to the active site. The cysteines at positions 128 and 136 are disulfide-linked. H145 is an active-site residue. Residues T148 and T195 each contribute to the substrate site.

In terms of assembly, homodimer.

The catalysed reaction is ADP-alpha-D-ribose 1''-phosphate + H2O = ADP-D-ribose + phosphate. Functionally, highly specific phosphatase involved in the metabolism of ADP-ribose 1''-phosphate (Appr1p) which is produced as a consequence of tRNA splicing. + phosphate. The sequence is that of Probable ADP-ribose 1''-phosphate phosphatase YML087W from Saccharomyces cerevisiae (strain ATCC 204508 / S288c) (Baker's yeast).